Reading from the N-terminus, the 213-residue chain is UPF0319 protein HAPS_0727 (213 aa).

An N-terminal signal peptide occupies residues 1–21 (MKLGKIALAMTALIAGTTAFA).

This sequence belongs to the UPF0319 family.

This Glaesserella parasuis serovar 5 (strain SH0165) (Haemophilus parasuis) protein is UPF0319 protein HAPS_0727.